We begin with the raw amino-acid sequence, 402 residues long: B box and SPRY domain-containing protein (402 aa).

The tract at residues 1–20 (MSAEGAEPGPGSGSGPGPGP) is disordered. The B box-type zinc-finger motif lies at 17 to 65 (GPGPLCPEHGQALSWFCGSERRPVCAACAGLGGRCRGHRIRRAEERAEE). One can recognise a B30.2/SPRY domain in the interval 212–402 (PLLTQLWATA…VADQTISIVR (191 aa)).

As to quaternary structure, interacts with TRPV5 and TRPV6. Interacts with YWHAZ/14-3-3 protein zeta.

It is found in the cytoplasm. It localises to the membrane. In terms of biological role, may regulate epithelial calcium transport by inhibiting TRPV5 activity. This Homo sapiens (Human) protein is B box and SPRY domain-containing protein (BSPRY).